A 267-amino-acid chain; its full sequence is tRNA pseudouridine synthase A (267 aa).

Catalysis depends on aspartate 51, which acts as the Nucleophile. A substrate-binding site is contributed by tyrosine 109.

The protein belongs to the tRNA pseudouridine synthase TruA family. In terms of assembly, homodimer.

The enzyme catalyses uridine(38/39/40) in tRNA = pseudouridine(38/39/40) in tRNA. Formation of pseudouridine at positions 38, 39 and 40 in the anticodon stem and loop of transfer RNAs. This Staphylococcus aureus (strain Mu3 / ATCC 700698) protein is tRNA pseudouridine synthase A.